Consider the following 75-residue polypeptide: Dermaseptin-SP4 (75 aa).

Positions M1 to C22 are cleaved as a signal peptide. A propeptide spanning residues E23–R45 is cleaved from the precursor. Proline amide is present on P72. The propeptide occupies E74–Q75.

Belongs to the frog skin active peptide (FSAP) family. Dermaseptin subfamily. As to expression, expressed by the skin glands.

The protein localises to the secreted. The protein resides in the target cell membrane. Antimicrobial peptide with activity against Gram-positive and Gram-negative bacteria and fungi. Has been tested against E.coli (MIC=47.25-128 uM), S.aureus (MIC=189-512 uM), K.pneumoniae (MIC=189 uM) and C.albicans (MIC&gt;189 uM). Probably acts by disturbing membrane functions with its alpha-helical amphipathic structure. May penetrate bacterial membranes, but stay at the mammalian membrane surface. Shows a weak hemolytic activity. In Agalychnis spurrelli (Gliding leaf frog), this protein is Dermaseptin-SP4.